We begin with the raw amino-acid sequence, 308 residues long: Glycine-rich protein GRP33 (308 aa).

The KH domain maps to 83-118 (DQFPKYNFLGKLLGPGGSTMKQLQDETMTKISILGR). Composition is skewed to gly residues over residues 203–220 (GPMGPQGRGRGRGRGGFS) and 273–294 (RGAGAGARGARGGLDQSRGGGK). 2 disordered regions span residues 203–222 (GPMGPQGRGRGRGRGGFSGP) and 270–308 (SPGRGAGAGARGARGGLDQSRGGGKFPSARGGRGRAAPY).

Post-translationally, the arginines in the Gly-rich domain might be methylated.

In Artemia salina (Brine shrimp), this protein is Glycine-rich protein GRP33.